A 96-amino-acid chain; its full sequence is Molybdopterin synthase sulfur carrier subunit (96 aa).

The residue at position 96 (glycine 96) is a 1-thioglycine; alternate. Glycine 96 carries the post-translational modification Glycyl adenylate; alternate.

It belongs to the MoaD family. MOCS2A subfamily. In terms of assembly, heterotetramer; composed of 2 small (MOCS2A) and 2 large (MOCS2B) subunits. C-terminal thiocarboxylation occurs in 2 steps, it is first acyl-adenylated (-COAMP) via the hesA/moeB/thiF part of MOCS3, then thiocarboxylated (-COSH) via the rhodanese domain of MOCS3.

It is found in the cytoplasm. Its pathway is cofactor biosynthesis; molybdopterin biosynthesis. Its function is as follows. Acts as a sulfur carrier required for molybdopterin biosynthesis. Component of the molybdopterin synthase complex that catalyzes the conversion of precursor Z into molybdopterin by mediating the incorporation of 2 sulfur atoms into precursor Z to generate a dithiolene group. In the complex, serves as sulfur donor by being thiocarboxylated (-COSH) at its C-terminus by MOCS3. After interaction with MOCS2B, the sulfur is then transferred to precursor Z to form molybdopterin. This Arabidopsis thaliana (Mouse-ear cress) protein is Molybdopterin synthase sulfur carrier subunit.